A 126-amino-acid chain; its full sequence is Aspartate 1-decarboxylase (126 aa).

Ser25 (schiff-base intermediate with substrate; via pyruvic acid) is an active-site residue. Position 25 is a pyruvic acid (Ser) (Ser25). Residue Thr57 participates in substrate binding. Tyr58 acts as the Proton donor in catalysis. 73 to 75 (GSA) contacts substrate.

Belongs to the PanD family. Heterooctamer of four alpha and four beta subunits. It depends on pyruvate as a cofactor. Is synthesized initially as an inactive proenzyme, which is activated by self-cleavage at a specific serine bond to produce a beta-subunit with a hydroxyl group at its C-terminus and an alpha-subunit with a pyruvoyl group at its N-terminus.

Its subcellular location is the cytoplasm. The catalysed reaction is L-aspartate + H(+) = beta-alanine + CO2. Its pathway is cofactor biosynthesis; (R)-pantothenate biosynthesis; beta-alanine from L-aspartate: step 1/1. Catalyzes the pyruvoyl-dependent decarboxylation of aspartate to produce beta-alanine. The sequence is that of Aspartate 1-decarboxylase from Acidovorax ebreus (strain TPSY) (Diaphorobacter sp. (strain TPSY)).